Reading from the N-terminus, the 916-residue chain is Isoleucine--tRNA ligase (916 aa).

The 'HIGH' region motif lies at 57–67; that stretch reads PYANGNLHMGH. Glutamate 554 is an L-isoleucyl-5'-AMP binding site. The 'KMSKS' region signature appears at 595-599; sequence KMSKS. Lysine 598 contacts ATP. The Zn(2+) site is built by cysteine 885, cysteine 888, cysteine 905, and cysteine 908.

It belongs to the class-I aminoacyl-tRNA synthetase family. IleS type 1 subfamily. Monomer. Requires Zn(2+) as cofactor.

It is found in the cytoplasm. The catalysed reaction is tRNA(Ile) + L-isoleucine + ATP = L-isoleucyl-tRNA(Ile) + AMP + diphosphate. Catalyzes the attachment of isoleucine to tRNA(Ile). As IleRS can inadvertently accommodate and process structurally similar amino acids such as valine, to avoid such errors it has two additional distinct tRNA(Ile)-dependent editing activities. One activity is designated as 'pretransfer' editing and involves the hydrolysis of activated Val-AMP. The other activity is designated 'posttransfer' editing and involves deacylation of mischarged Val-tRNA(Ile). The chain is Isoleucine--tRNA ligase from Staphylococcus haemolyticus (strain JCSC1435).